A 440-amino-acid chain; its full sequence is Chromosomal replication initiator protein DnaA (440 aa).

Residues 1-74 (MNPSQILENL…VQSGNKAIIN (74 aa)) are domain I, interacts with DnaA modulators. The tract at residues 74–99 (NIQAQSAKQSNKSTKIDIAHIKAQST) is domain II. The segment at 100–316 (ILNPSFTFES…GIIISLNAYA (217 aa)) is domain III, AAA+ region. Residues glycine 146, glycine 148, lysine 149, and threonine 150 each contribute to the ATP site. The interval 317 to 440 (TILGQEITLE…KNKILVKSQS (124 aa)) is domain IV, binds dsDNA.

This sequence belongs to the DnaA family. In terms of assembly, oligomerizes as a right-handed, spiral filament on DNA at oriC.

The protein localises to the cytoplasm. Its function is as follows. Plays an essential role in the initiation and regulation of chromosomal replication. ATP-DnaA binds to the origin of replication (oriC) to initiate formation of the DNA replication initiation complex once per cell cycle. Binds the DnaA box (a 9 base pair repeat at the origin) and separates the double-stranded (ds)DNA. Forms a right-handed helical filament on oriC DNA; dsDNA binds to the exterior of the filament while single-stranded (ss)DNA is stabiized in the filament's interior. The ATP-DnaA-oriC complex binds and stabilizes one strand of the AT-rich DNA unwinding element (DUE), permitting loading of DNA polymerase. After initiation quickly degrades to an ADP-DnaA complex that is not apt for DNA replication. Binds acidic phospholipids. The protein is Chromosomal replication initiator protein DnaA of Campylobacter jejuni subsp. jejuni serotype O:2 (strain ATCC 700819 / NCTC 11168).